Reading from the N-terminus, the 349-residue chain is Protein RecA (349 aa).

Residue 65–72 participates in ATP binding; that stretch reads GPESSGKT.

It belongs to the RecA family.

The protein resides in the cytoplasm. Its function is as follows. Can catalyze the hydrolysis of ATP in the presence of single-stranded DNA, the ATP-dependent uptake of single-stranded DNA by duplex DNA, and the ATP-dependent hybridization of homologous single-stranded DNAs. It interacts with LexA causing its activation and leading to its autocatalytic cleavage. The protein is Protein RecA of Vibrio vulnificus (strain CMCP6).